Consider the following 196-residue polypeptide: Mpv17-like protein (196 aa).

At 1 to 16 (MAGWWPALSRAARRHP) the chain is on the cytoplasmic side. Residues 16–55 (PWPTNVLLYGSLVSAGDALQQRLQGREANWRQTRRVATLV) are targeting to peroxisomes. Residues 17-34 (WPTNVLLYGSLVSAGDAL) traverse the membrane as a helical segment. At 35–50 (QQRLQGREANWRQTRR) the chain is on the lumenal side. A helical membrane pass occupies residues 51–67 (VATLVVTFHANFNYVWL). Residues 68–90 (RLLERALPGRAPHALLAKLLCDQ) are Cytoplasmic-facing. A helical membrane pass occupies residues 91–108 (VVGAPIAVSAFYVGMSIL). Over 109 to 150 (QGKDDIFLDLKQKFWNTYLSGLMYWPFVQLTNFSLVPVQWRT) the chain is Lumenal. A helical transmembrane segment spans residues 151–167 (AYAGVCGFLWATFICFS). At 168-196 (QQSGDGTFKSAFTILYTKGTSATEGYPKK) the chain is on the cytoplasmic side.

Belongs to the peroxisomal membrane protein PXMP2/4 family. Isoform 1 is detected in the kidney (at protein level). Isoform 1 and isoform 2 are expressed in the kidney, heart, liver, lung, pancreas and skeletal muscle.

The protein resides in the peroxisome membrane. Its function is as follows. Participates in reactive oxygen species metabolism by up- or down-regulation of the genes of antioxidant enzymes. Protective against the mitochondrial apoptotic cascade. The polypeptide is Mpv17-like protein (MPV17L) (Homo sapiens (Human)).